The primary structure comprises 207 residues: Ribonuclease HII (207 aa).

An RNase H type-2 domain is found at 12-205 (GLVVGIDEVG…IRNMIEAEAH (194 aa)). A divalent metal cation contacts are provided by D18, E19, and D114.

This sequence belongs to the RNase HII family. Mn(2+) serves as cofactor. It depends on Mg(2+) as a cofactor.

The protein localises to the cytoplasm. The catalysed reaction is Endonucleolytic cleavage to 5'-phosphomonoester.. Endonuclease that specifically degrades the RNA of RNA-DNA hybrids. The chain is Ribonuclease HII from Gluconobacter oxydans (strain 621H) (Gluconobacter suboxydans).